We begin with the raw amino-acid sequence, 239 residues long: Putative 3-methyladenine DNA glycosylase (239 aa).

This sequence belongs to the DNA glycosylase MPG family.

The protein is Putative 3-methyladenine DNA glycosylase of Pseudomonas aeruginosa (strain ATCC 15692 / DSM 22644 / CIP 104116 / JCM 14847 / LMG 12228 / 1C / PRS 101 / PAO1).